A 340-amino-acid chain; its full sequence is Heat-inducible transcription repressor HrcA (340 aa).

This sequence belongs to the HrcA family.

Its function is as follows. Negative regulator of class I heat shock genes (grpE-dnaK-dnaJ and groELS operons). Prevents heat-shock induction of these operons. The chain is Heat-inducible transcription repressor HrcA from Burkholderia cenocepacia (strain HI2424).